A 155-amino-acid polypeptide reads, in one-letter code: MTDPLIKRSGIQEEEDLTTLKFPRDLKDAKFLLNSEVAILLEHRKGISESEGTEFPQNTLLIHLYYNSINDIIRTFHKTLAYAEKFSRYKNKTSIKQVRTALSKQNLEEFEIASLANLCPEISDEAKSLIPSLKKMEDDELQAILDELSNLRKFN.

This sequence belongs to the eukaryotic RPB4 RNA polymerase subunit family. As to quaternary structure, component of the RNA polymerase II (Pol II) complex consisting of 12 subunits. RPB4 and RPB7 form a subcomplex that protrudes from the 10-subunit Pol II core complex.

It localises to the nucleus. Its function is as follows. DNA-dependent RNA polymerase catalyzes the transcription of DNA into RNA using the four ribonucleoside triphosphates as substrates. Component of RNA polymerase II which synthesizes mRNA precursors and many functional non-coding RNAs. Pol II is the central component of the basal RNA polymerase II transcription machinery. It is composed of mobile elements that move relative to each other. RPB4 is part of a subcomplex with RPB7 that binds to a pocket formed by RPB1, RPB2 and RPB6 at the base of the clamp element. The RPB4-RPB7 subcomplex seems to lock the clamp via RPB7 in the closed conformation thus preventing double-stranded DNA to enter the active site cleft. The RPB4-RPB7 subcomplex binds single-stranded DNA and RNA. This is DNA-directed RNA polymerase II subunit rpb4 (polr2d) from Dictyostelium discoideum (Social amoeba).